A 648-amino-acid polypeptide reads, in one-letter code: Interferon-induced GTP-binding protein Mx1 (648 aa).

Position 1 is an N-acetylmethionine (Met-1). Residues 1–26 are disordered; sequence MVHSDLGIEELDSPESSLNGSEDMES. Residues 56-329 form the Dynamin-type G domain; sequence DLALPAIAVI…LIMHICKTLP (274 aa). The interval 66–73 is G1 motif; sequence GDQSSGKS. Residue 66-73 participates in GTP binding; it reads GDQSSGKS. The interval 91 to 93 is G2 motif; sequence VTR. A G3 motif region spans residues 167–170; the sequence is DLPG. GTP contacts are provided by residues 167–171 and 236–239; these read DLPGI and TKPD. Positions 236–239 are G4 motif; sequence TKPD. The tract at residues 268–271 is G5 motif; that stretch reads KCRG. The tract at residues 330-355 is bundle signaling element (BSE); it reads LLENQIKETHQRITEELQKYGKDIPE. The interval 355 to 522 is middle domain; that stretch reads EEESEKMFCL…HFQMEQLVYC (168 aa). The stalk stretch occupies residues 356–618; that stretch reads EESEKMFCLI…KDQYDWLLKE (263 aa). The segment at 543-546 is critical for lipid-binding; it reads KNKK. The GED domain maps to 560–648; the sequence is TDEIFQHLTA…ARQRLAKFPG (89 aa).

This sequence belongs to the TRAFAC class dynamin-like GTPase superfamily. Dynamin/Fzo/YdjA family. As to quaternary structure, homooligomer. Oligomerizes into multimeric filamentous or ring-like structures by virtue of its stalk domain. Oligomerization is critical for GTPase activity, protein stability, and recognition of viral target structures. Interacts with TRPC1, TRPC3, TRPC4, TRPC5, TRPC6 and TRPC7. Interacts with HSPA5. Interacts with TUBB/TUBB5. Interacts with DDX39A and DDX39B. ISGylated. As to expression, ubiquitously expressed.

It is found in the cytoplasm. Its subcellular location is the endoplasmic reticulum membrane. The protein resides in the perinuclear region. The protein localises to the nucleus. Functionally, interferon-induced dynamin-like GTPase with antiviral activity against rabies virus (RABV), vesicular stomatitis virus (VSV) and murine pneumonia virus (MPV). Isoform 1 but not isoform 2 shows antiviral activity against vesicular stomatitis virus (VSV). In Bos taurus (Bovine), this protein is Interferon-induced GTP-binding protein Mx1 (MX1).